Consider the following 281-residue polypeptide: Tumor necrosis factor ligand superfamily member 6 (281 aa).

Residues 1-80 lie on the Cytoplasmic side of the membrane; sequence MQQPFNYPYP…LKKRGNHSTG (80 aa). Residues 20–71 form a disordered region; sequence SSPWAPPGTVLPCPTSVPRRPGQRRPPPPPPPPPLPPPPPPPPLPPLPLPPL. Positions 43-70 are enriched in pro residues; that stretch reads RRPPPPPPPPPLPPPPPPPPLPPLPLPP. The chain crosses the membrane as a helical; Signal-anchor for type II membrane protein span at residues 81-102; it reads LCLLVMFFMVLVALVGLGLGMF. At 103 to 281 the chain is on the extracellular side; it reads QLFHLQKELA…SQTFFGLYKL (179 aa). Polar residues predominate over residues 118–128; that stretch reads TSQMHTASSLE. A disordered region spans residues 118 to 142; that stretch reads TSQMHTASSLEKQIGHPSPPPEKKE. The THD domain occupies 145 to 281; sequence KVAHLTGKSN…SQTFFGLYKL (137 aa). An N-linked (GlcNAc...) asparagine glycan is attached at Asn-184. Cys-202 and Cys-233 are joined by a disulfide. N-linked (GlcNAc...) asparagine glycans are attached at residues Asn-250 and Asn-260.

It belongs to the tumor necrosis factor family. As to quaternary structure, homotrimer. Interacts with ARHGAP9, BAIAP2L1, BTK, CACNB3, CACNB4, CRK, DLG2, DNMBP, DOCK4, EPS8L3, FGR, FYB1, FYN, HCK, ITK, ITSN2, KALRN, LYN, MACC1, MIA, MPP4, MYO15A, NCF1, NCK1, NCK2, NCKIPSD, OSTF1, PIK3R1, PSTPIP1, RIMBP3C, SAMSN1, SH3GL3, SH3PXD2B, SH3PXD2A, SH3RF2, SKAP2, SNX33, SNX9, SORBS3, SPTA1, SRC, SRGAP1, SRGAP2, SRGAP3, TEC, TJP3 and YES1. Post-translationally, the soluble form derives from the membrane form by proteolytic processing. The membrane-bound form undergoes two successive intramembrane proteolytic cleavages. The first one is processed by ADAM10 producing an N-terminal fragment, which lacks the receptor-binding extracellular domain. This ADAM10-processed FasL (FasL APL) remnant form is still membrane anchored and further processed by SPPL2A that liberates the FasL intracellular domain (FasL ICD). FasL shedding by ADAM10 is a prerequisite for subsequent intramembrane cleavage by SPPL2A in T-cells. In terms of processing, N-glycosylated. Glycosylation enhances apoptotic activity. Phosphorylated by FGR on tyrosine residues; this is required for ubiquitination and subsequent internalization. Post-translationally, monoubiquitinated.

It localises to the cell membrane. The protein localises to the cytoplasmic vesicle lumen. Its subcellular location is the lysosome lumen. The protein resides in the secreted. It is found in the nucleus. Functionally, cytokine that binds to TNFRSF6/FAS, a receptor that transduces the apoptotic signal into cells. Involved in cytotoxic T-cell-mediated apoptosis, natural killer cell-mediated apoptosis and in T-cell development. Initiates fratricidal/suicidal activation-induced cell death (AICD) in antigen-activated T-cells contributing to the termination of immune responses. TNFRSF6/FAS-mediated apoptosis also has a role in the induction of peripheral tolerance. Binds to TNFRSF6B/DcR3, a decoy receptor that blocks apoptosis. Induces FAS-mediated activation of NF-kappa-B, initiating non-apoptotic signaling pathways. Can induce apoptosis but does not appear to be essential for this process. Its function is as follows. Cytoplasmic form induces gene transcription inhibition. In Homo sapiens (Human), this protein is Tumor necrosis factor ligand superfamily member 6 (FASLG).